The following is a 236-amino-acid chain: Pyridoxine 5'-phosphate synthase (236 aa).

Asn-6 provides a ligand contact to 3-amino-2-oxopropyl phosphate. Asp-8–His-9 lines the 1-deoxy-D-xylulose 5-phosphate pocket. Residue Arg-17 coordinates 3-amino-2-oxopropyl phosphate. His-42 acts as the Proton acceptor in catalysis. Positions 44 and 49 each coordinate 1-deoxy-D-xylulose 5-phosphate. The active-site Proton acceptor is Glu-69. Thr-99 is a 1-deoxy-D-xylulose 5-phosphate binding site. The active-site Proton donor is the His-190. Residues Gly-191 and Gly-212–His-213 each bind 3-amino-2-oxopropyl phosphate.

It belongs to the PNP synthase family. Homooctamer; tetramer of dimers.

Its subcellular location is the cytoplasm. The enzyme catalyses 3-amino-2-oxopropyl phosphate + 1-deoxy-D-xylulose 5-phosphate = pyridoxine 5'-phosphate + phosphate + 2 H2O + H(+). The protein operates within cofactor biosynthesis; pyridoxine 5'-phosphate biosynthesis; pyridoxine 5'-phosphate from D-erythrose 4-phosphate: step 5/5. In terms of biological role, catalyzes the complicated ring closure reaction between the two acyclic compounds 1-deoxy-D-xylulose-5-phosphate (DXP) and 3-amino-2-oxopropyl phosphate (1-amino-acetone-3-phosphate or AAP) to form pyridoxine 5'-phosphate (PNP) and inorganic phosphate. This is Pyridoxine 5'-phosphate synthase from Chloroherpeton thalassium (strain ATCC 35110 / GB-78).